Reading from the N-terminus, the 232-residue chain is LOB domain-containing protein 11 (232 aa).

Residues 1–50 (MLKMEINGGVATPTASAVAKVTETTTPVNSPSPTSSPPPPPSPQQPPQPP) form a disordered region. Positions 34–50 (TSSPPPPPSPQQPPQPP) are enriched in pro residues. Positions 54 to 155 (SPCAACKILR…AQLAKTQVEL (102 aa)) constitute an LOB domain. Residues 181–218 (EQGQQKMSFESSFESGDEFISSPDEESNDLGFLEDNNN) are disordered. Over residues 188-202 (SFESSFESGDEFISS) the composition is skewed to low complexity.

This sequence belongs to the LOB domain-containing protein family. As to expression, expressed in young shoots, stems, leaves and flowers.

This is LOB domain-containing protein 11 (LBD11) from Arabidopsis thaliana (Mouse-ear cress).